A 354-amino-acid chain; its full sequence is MSIEVRGLSKRFGAFRALDEVSLHIETGELVALLGPSGCGKTTLLRIIAGLESADAGSVLFAGEDATDVDVRQRQVGFVFQHYALFKHMTVFENVAFGLRVRHRSQRPSEARIRAKVLDLLGLVQLDWLADRYPAQLSGGQRQRIALARALAVEPRVLLLDEPFGALDAKVRKELRRWLRRLHDELHVASVFVTHDQEEALEVADRVVLMNAGRIEQVGSPREVWERPATPFVYGFLGDVNQLHGHATRGVWRLGEVALPAPDLPEADNQRAIAYVRPHDIDLARAGTAAPGIPVRLNHVYLAGPSAYLELARQDDQAIIEAQVPEPLFRSLGLKEGEALLAQPRRARVFAVQP.

The region spanning 3 to 237 (IEVRGLSKRF…PATPFVYGFL (235 aa)) is the ABC transporter domain. 35–42 (GPSGCGKT) lines the ATP pocket.

It belongs to the ABC transporter superfamily. Sulfate/tungstate importer (TC 3.A.1.6) family. As to quaternary structure, the complex is composed of two ATP-binding proteins (CysA), two transmembrane proteins (CysT and CysW) and a solute-binding protein (CysP).

It is found in the cell inner membrane. It catalyses the reaction sulfate(out) + ATP + H2O = sulfate(in) + ADP + phosphate + H(+). The enzyme catalyses thiosulfate(out) + ATP + H2O = thiosulfate(in) + ADP + phosphate + H(+). Part of the ABC transporter complex CysAWTP involved in sulfate/thiosulfate import. Responsible for energy coupling to the transport system. This is Sulfate/thiosulfate import ATP-binding protein CysA from Bordetella bronchiseptica (strain ATCC BAA-588 / NCTC 13252 / RB50) (Alcaligenes bronchisepticus).